Reading from the N-terminus, the 70-residue chain is Large ribosomal subunit protein bL31 (70 aa).

Cys-16, Cys-18, Cys-38, and Cys-41 together coordinate Zn(2+).

This sequence belongs to the bacterial ribosomal protein bL31 family. Type A subfamily. Part of the 50S ribosomal subunit. It depends on Zn(2+) as a cofactor.

Its function is as follows. Binds the 23S rRNA. This Vesicomyosocius okutanii subsp. Calyptogena okutanii (strain HA) protein is Large ribosomal subunit protein bL31.